Reading from the N-terminus, the 543-residue chain is Chaperonin GroEL (543 aa).

ATP is bound by residues 30-33 (TLGP), Lys-51, 87-91 (DGTTT), Gly-415, 480-482 (DAA), and Asp-496.

Belongs to the chaperonin (HSP60) family. Forms a cylinder of 14 subunits composed of two heptameric rings stacked back-to-back. Interacts with the co-chaperonin GroES.

It localises to the cytoplasm. It carries out the reaction ATP + H2O + a folded polypeptide = ADP + phosphate + an unfolded polypeptide.. Together with its co-chaperonin GroES, plays an essential role in assisting protein folding. The GroEL-GroES system forms a nano-cage that allows encapsulation of the non-native substrate proteins and provides a physical environment optimized to promote and accelerate protein folding. This is Chaperonin GroEL from Hydrogenobaculum sp. (strain Y04AAS1).